The following is a 329-amino-acid chain: Serpentine receptor class alpha-4 (329 aa).

Transmembrane regions (helical) follow at residues 25–45, 103–123, 144–164, 188–208, 238–258, and 273–293; these read IIVL…IKVV, LYLE…TGLL, GLAI…LIIW, YFQS…ILIW, ICFL…GFFI, and LVAV…ILIF.

It belongs to the nematode receptor-like protein sra family.

It localises to the membrane. The protein is Serpentine receptor class alpha-4 (sra-4) of Caenorhabditis elegans.